Consider the following 556-residue polypeptide: Arginine--tRNA ligase 1 (556 aa).

The 'HIGH' region signature appears at alanine 132–histidine 142.

The protein belongs to the class-I aminoacyl-tRNA synthetase family. Monomer.

The protein localises to the cytoplasm. It carries out the reaction tRNA(Arg) + L-arginine + ATP = L-arginyl-tRNA(Arg) + AMP + diphosphate. The polypeptide is Arginine--tRNA ligase 1 (argS1) (Halalkalibacterium halodurans (strain ATCC BAA-125 / DSM 18197 / FERM 7344 / JCM 9153 / C-125) (Bacillus halodurans)).